The chain runs to 269 residues: Surfeit locus protein 4 (269 aa).

5 consecutive transmembrane segments (helical) span residues 64 to 84, 92 to 112, 179 to 199, 203 to 223, and 239 to 259; these read LLAS…CVLV, YACF…SILW, FFSI…AIGF, LAAL…NAFW, and FFQT…GPGG. The Di-lysine motif signature appears at 266–269; it reads KKEW.

This sequence belongs to the SURF4 family. As to quaternary structure, found in a complex composed at least of SURF4, TMED2 and TMED10. May interact with LMAN1. Interacts with ZFYVE27 and with KIF5A in a ZFYVE27-dependent manner. Interacts with STING1. Interacts with SAR1B. Interacts with TMEM41B.

Its subcellular location is the endoplasmic reticulum membrane. It is found in the endoplasmic reticulum-Golgi intermediate compartment membrane. The protein localises to the golgi apparatus membrane. Functionally, endoplasmic reticulum cargo receptor that mediates the export of lipoproteins by recruiting cargos into COPII vesicles to facilitate their secretion. Acts as a cargo receptor for lipoproteins bearing both APOB and APOA1, thereby regulating lipoprotein delivery and the maintenance of lipid homeostasis. Synergizes with the GTPase SAR1B to mediate transport of circulating lipoproteins. Promotes the secretion of PCSK9. Also mediates the efficient secretion of erythropoietin (EPO). May also play a role in the maintenance of the architecture of the endoplasmic reticulum-Golgi intermediate compartment and of the Golgi. This chain is Surfeit locus protein 4, found in Homo sapiens (Human).